A 276-amino-acid polypeptide reads, in one-letter code: Imidazole glycerol phosphate synthase subunit HisF (276 aa).

Catalysis depends on residues Asp11 and Asp130.

This sequence belongs to the HisA/HisF family. In terms of assembly, heterodimer of HisH and HisF.

It is found in the cytoplasm. It catalyses the reaction 5-[(5-phospho-1-deoxy-D-ribulos-1-ylimino)methylamino]-1-(5-phospho-beta-D-ribosyl)imidazole-4-carboxamide + L-glutamine = D-erythro-1-(imidazol-4-yl)glycerol 3-phosphate + 5-amino-1-(5-phospho-beta-D-ribosyl)imidazole-4-carboxamide + L-glutamate + H(+). Its pathway is amino-acid biosynthesis; L-histidine biosynthesis; L-histidine from 5-phospho-alpha-D-ribose 1-diphosphate: step 5/9. IGPS catalyzes the conversion of PRFAR and glutamine to IGP, AICAR and glutamate. The HisF subunit catalyzes the cyclization activity that produces IGP and AICAR from PRFAR using the ammonia provided by the HisH subunit. The polypeptide is Imidazole glycerol phosphate synthase subunit HisF (Beijerinckia indica subsp. indica (strain ATCC 9039 / DSM 1715 / NCIMB 8712)).